We begin with the raw amino-acid sequence, 457 residues long: NADP-specific glutamate dehydrogenase (457 aa).

K111 is a catalytic residue.

The protein belongs to the Glu/Leu/Phe/Val dehydrogenases family. As to quaternary structure, homohexamer.

The catalysed reaction is L-glutamate + NADP(+) + H2O = 2-oxoglutarate + NH4(+) + NADPH + H(+). The chain is NADP-specific glutamate dehydrogenase (gdhA) from Agaricus bisporus (White button mushroom).